The sequence spans 81 residues: MGSLSLWHWIIVGAVLLLLFGGKGKVSDIMGDVAKGIKSFKKGLSEDDEKPEAARPAEPARSLDHQPVAEQPKVSETHRIG.

A helical membrane pass occupies residues 1–21 (MGSLSLWHWIIVGAVLLLLFG). The segment at 41 to 81 (KKGLSEDDEKPEAARPAEPARSLDHQPVAEQPKVSETHRIG) is disordered.

It belongs to the TatA/E family. As to quaternary structure, the Tat system comprises two distinct complexes: a TatABC complex, containing multiple copies of TatA, TatB and TatC subunits, and a separate TatA complex, containing only TatA subunits. Substrates initially bind to the TatABC complex, which probably triggers association of the separate TatA complex to form the active translocon.

The protein resides in the cell inner membrane. In terms of biological role, part of the twin-arginine translocation (Tat) system that transports large folded proteins containing a characteristic twin-arginine motif in their signal peptide across membranes. TatA could form the protein-conducting channel of the Tat system. This chain is Sec-independent protein translocase protein TatA, found in Beijerinckia indica subsp. indica (strain ATCC 9039 / DSM 1715 / NCIMB 8712).